Reading from the N-terminus, the 61-residue chain is Large ribosomal subunit protein uL30 (61 aa).

This sequence belongs to the universal ribosomal protein uL30 family. As to quaternary structure, part of the 50S ribosomal subunit.

This is Large ribosomal subunit protein uL30 from Bordetella petrii (strain ATCC BAA-461 / DSM 12804 / CCUG 43448).